Consider the following 93-residue polypeptide: Parbolysin P1 (93 aa).

3 disulfides stabilise this stretch: C16–C37, C22–C33, and C47–C60.

The protein belongs to the worm cytolysin family. In terms of tissue distribution, localized within the skin and proboscis and are most readily isolated from body mucus secretions.

It is found in the secreted. Cytolysin that shows hemolytic activity (on bovine erythrocytes, HC(50)=5.75 mg/ml). This hemolytic activity is completely inhibited by small unilamelar vesicles composed of PC/PG, PC/PI and PC/PS in 1:1 molar ratios (with at least 100 mg/ml concentration). The recombinant protein does not show hemolytic activity, suggesting that it is not properly folded or that it requires a free N-terminal end for its activity. This is Parbolysin P1 from Parborlasia corrugatus (Antarctic nemertean worm).